We begin with the raw amino-acid sequence, 326 residues long: Beta-ketoacyl-[acyl-carrier-protein] synthase III (326 aa).

Residues C116 and H253 contribute to the active site. Positions Q254–R258 are ACP-binding. N283 is an active-site residue.

This sequence belongs to the thiolase-like superfamily. FabH family. Homodimer.

It localises to the cytoplasm. It carries out the reaction malonyl-[ACP] + acetyl-CoA + H(+) = 3-oxobutanoyl-[ACP] + CO2 + CoA. The protein operates within lipid metabolism; fatty acid biosynthesis. Catalyzes the condensation reaction of fatty acid synthesis by the addition to an acyl acceptor of two carbons from malonyl-ACP. Catalyzes the first condensation reaction which initiates fatty acid synthesis and may therefore play a role in governing the total rate of fatty acid production. Possesses both acetoacetyl-ACP synthase and acetyl transacylase activities. Its substrate specificity determines the biosynthesis of branched-chain and/or straight-chain of fatty acids. This Jannaschia sp. (strain CCS1) protein is Beta-ketoacyl-[acyl-carrier-protein] synthase III.